The following is a 189-amino-acid chain: Movement protein (189 aa).

It belongs to the tombusvirus/aureusvirus movement protein p22 family. In terms of assembly, interacts with host protein HFI22. Post-translationally, phosphorylated.

It localises to the host membrane. Functionally, transports viral genome to neighboring plant cells directly through plasmosdesmata, without any budding. The movement protein allows efficient cell to cell propagation, by bypassing the host cell wall barrier. In Tomato bushy stunt virus (strain BS-3) (TBSV), this protein is Movement protein.